Here is a 726-residue protein sequence, read N- to C-terminus: Catalase-peroxidase (726 aa).

Residues 90-213 (WHAAGTYRIG…LAAVQMGLIY (124 aa)) constitute a cross-link (tryptophyl-tyrosyl-methioninium (Trp-Tyr) (with M-239)). Catalysis depends on His-91, which acts as the Proton acceptor. The segment at residues 213–239 (YVNPEGPNGKPDPAAAARDIRETFARM) is a cross-link (tryptophyl-tyrosyl-methioninium (Tyr-Met) (with W-90)). His-254 provides a ligand contact to heme b. The segment at 338–359 (TPKGGAGAGTVPDAHDPSKRHA) is disordered.

This sequence belongs to the peroxidase family. Peroxidase/catalase subfamily. As to quaternary structure, homodimer or homotetramer. Heme b is required as a cofactor. In terms of processing, formation of the three residue Trp-Tyr-Met cross-link is important for the catalase, but not the peroxidase activity of the enzyme.

It carries out the reaction H2O2 + AH2 = A + 2 H2O. The enzyme catalyses 2 H2O2 = O2 + 2 H2O. Functionally, bifunctional enzyme with both catalase and broad-spectrum peroxidase activity. The protein is Catalase-peroxidase of Bradyrhizobium sp. (strain ORS 278).